We begin with the raw amino-acid sequence, 477 residues long: Serine/threonine-protein kinase pakC (477 aa).

Residues 13–108 form the PH domain; sequence SPDKEGELKK…WMKAVEKGSE (96 aa). The region spanning 112–125 is the CRIB domain; sequence VSQPFNLKHEVHVD. In terms of domain architecture, Protein kinase spans 204 to 458; that stretch reads YKNMTKIGEG…ATDLLKHPFM (255 aa). ATP contacts are provided by residues 210–218 and K233; that span reads IGEGAAGEV. The Proton acceptor role is filled by D326.

Belongs to the protein kinase superfamily. STE Ser/Thr protein kinase family. STE20 subfamily. In terms of assembly, interacts with GTP-bound racB. Mg(2+) is required as a cofactor.

It is found in the cytoplasm. The protein localises to the membrane. It catalyses the reaction L-seryl-[protein] + ATP = O-phospho-L-seryl-[protein] + ADP + H(+). It carries out the reaction L-threonyl-[protein] + ATP = O-phospho-L-threonyl-[protein] + ADP + H(+). With respect to regulation, kinase activity is rapidly and transiently increased in response to chemoattractant stimulation. Its function is as follows. Has role in the regulation of chemotaxis. This chain is Serine/threonine-protein kinase pakC (pakC), found in Dictyostelium discoideum (Social amoeba).